Reading from the N-terminus, the 391-residue chain is Multidrug resistance protein MdtL (391 aa).

A run of 12 helical transmembrane segments spans residues phenylalanine 4–valine 24, isoleucine 42–alanine 62, proline 69–glutamate 89, leucine 93–phenylalanine 113, leucine 131–methionine 151, serine 158–leucine 178, phenylalanine 203–valine 222, alanine 245–phenylalanine 265, threonine 269–proline 289, valine 293–methionine 313, leucine 331–isoleucine 351, and methionine 356–alanine 376.

It belongs to the major facilitator superfamily. DHA1 family. MdtL (TC 2.A.1.2.22) subfamily.

Its subcellular location is the cell inner membrane. Confers resistance to chloramphenicol. The protein is Multidrug resistance protein MdtL of Escherichia coli O139:H28 (strain E24377A / ETEC).